The primary structure comprises 343 residues: N-acetyl-gamma-glutamyl-phosphate reductase (343 aa).

Residue C147 is part of the active site.

The protein belongs to the NAGSA dehydrogenase family. Type 1 subfamily.

It localises to the cytoplasm. The enzyme catalyses N-acetyl-L-glutamate 5-semialdehyde + phosphate + NADP(+) = N-acetyl-L-glutamyl 5-phosphate + NADPH + H(+). Its pathway is amino-acid biosynthesis; L-arginine biosynthesis; N(2)-acetyl-L-ornithine from L-glutamate: step 3/4. Its function is as follows. Catalyzes the NADPH-dependent reduction of N-acetyl-5-glutamyl phosphate to yield N-acetyl-L-glutamate 5-semialdehyde. The chain is N-acetyl-gamma-glutamyl-phosphate reductase from Listeria monocytogenes serotype 4b (strain CLIP80459).